The following is a 376-amino-acid chain: Queuine tRNA-ribosyltransferase (376 aa).

The active-site Proton acceptor is the Asp-90. Substrate is bound by residues 90-94 (DSGGF), Asp-144, Gln-193, and Gly-220. The tract at residues 251–257 (GVGTPED) is RNA binding. Catalysis depends on Asp-270, which acts as the Nucleophile. The tract at residues 275–279 (TRNAR) is RNA binding; important for wobble base 34 recognition. Cys-308, Cys-310, Cys-313, and His-339 together coordinate Zn(2+).

Belongs to the queuine tRNA-ribosyltransferase family. In terms of assembly, homodimer. Within each dimer, one monomer is responsible for RNA recognition and catalysis, while the other monomer binds to the replacement base PreQ1. Requires Zn(2+) as cofactor.

It carries out the reaction 7-aminomethyl-7-carbaguanine + guanosine(34) in tRNA = 7-aminomethyl-7-carbaguanosine(34) in tRNA + guanine. It participates in tRNA modification; tRNA-queuosine biosynthesis. Its function is as follows. Catalyzes the base-exchange of a guanine (G) residue with the queuine precursor 7-aminomethyl-7-deazaguanine (PreQ1) at position 34 (anticodon wobble position) in tRNAs with GU(N) anticodons (tRNA-Asp, -Asn, -His and -Tyr). Catalysis occurs through a double-displacement mechanism. The nucleophile active site attacks the C1' of nucleotide 34 to detach the guanine base from the RNA, forming a covalent enzyme-RNA intermediate. The proton acceptor active site deprotonates the incoming PreQ1, allowing a nucleophilic attack on the C1' of the ribose to form the product. After dissociation, two additional enzymatic reactions on the tRNA convert PreQ1 to queuine (Q), resulting in the hypermodified nucleoside queuosine (7-(((4,5-cis-dihydroxy-2-cyclopenten-1-yl)amino)methyl)-7-deazaguanosine). The sequence is that of Queuine tRNA-ribosyltransferase from Cupriavidus necator (strain ATCC 17699 / DSM 428 / KCTC 22496 / NCIMB 10442 / H16 / Stanier 337) (Ralstonia eutropha).